An 870-amino-acid polypeptide reads, in one-letter code: Rho GTPase-activating protein 7 (870 aa).

Residues 18–125 form the PH domain; it reads TVFKSGPLFI…WKTALEQALA (108 aa). The Rho-GAP domain maps to 167-367; that stretch reads LALEDIDGSP…VLLEDYGSIF (201 aa). Disordered stretches follow at residues 378 to 432 and 446 to 465; these read STES…SGCT and DSDI…SNIR. Acidic residues predominate over residues 407–417; sequence NEVEPVTDDDN. Residues 569–693 adopt a coiled-coil conformation; it reads GEDELAIQRL…HQLNQQRQTH (125 aa). The disordered stretch occupies residues 736 to 793; the sequence is HEENVLGAEWRNSKGAGSFGVGNSRQPSRKQIPESTNTTDSKISEESGKISVDKLSSI. Residues 777–787 show a composition bias toward basic and acidic residues; that stretch reads KISEESGKISV.

In terms of biological role, acts as a GTPase activator for the Rac-type GTPase by converting it to an inactive GDP-bound state. This Arabidopsis thaliana (Mouse-ear cress) protein is Rho GTPase-activating protein 7 (ROPGAP7).